Here is a 292-residue protein sequence, read N- to C-terminus: Fat storage-inducing transmembrane protein 1 (292 aa).

Residues Met-1–Gln-18 lie on the Lumenal side of the membrane. The chain crosses the membrane as a helical span at residues Ala-19–Gly-39. Residues Ser-40–Arg-54 are Cytoplasmic-facing. The helical transmembrane segment at Leu-55 to Asn-75 threads the bilayer. Residues Pro-76–Ser-94 lie on the Lumenal side of the membrane. A helical membrane pass occupies residues Ala-95 to Thr-115. Residues Arg-116–Ala-141 are Cytoplasmic-facing. The helical transmembrane segment at Phe-142–Leu-162 threads the bilayer. The Lumenal segment spans residues His-163 to Thr-187. His-186 is an active-site residue. A helical membrane pass occupies residues Phe-188–Leu-208. Residues Ala-209–Leu-220 lie on the Cytoplasmic side of the membrane. A helical membrane pass occupies residues Val-221–Ile-241. Residues Tyr-242–Lys-249 lie on the Lumenal side of the membrane. Residue His-244 is part of the active site. The helical transmembrane segment at Val-250–Gln-270 threads the bilayer. The Cytoplasmic portion of the chain corresponds to Pro-271–Asn-292.

The protein belongs to the FIT family. FIT1 subfamily. In terms of tissue distribution, primarily expressed in heart and skeletal muscle.

It is found in the endoplasmic reticulum membrane. In terms of biological role, plays an important role in the formation of lipid droplets (LDs) which are storage organelles at the center of lipid and energy homeostasis. Directly binds to diacylglycerol (DAGs) and triacylglycerol. This Homo sapiens (Human) protein is Fat storage-inducing transmembrane protein 1.